The following is a 204-amino-acid chain: Recombination protein RecR (204 aa).

Residues 58-75 form a C4-type zinc finger; that stretch reads CSVCQNVTDREEDPCSIC. The Toprim domain maps to 83–181; that stretch reads TVICVVESPV…EVTKIARGIP (99 aa).

Belongs to the RecR family.

Its function is as follows. May play a role in DNA repair. It seems to be involved in an RecBC-independent recombinational process of DNA repair. It may act with RecF and RecO. In Chlorobium luteolum (strain DSM 273 / BCRC 81028 / 2530) (Pelodictyon luteolum), this protein is Recombination protein RecR.